We begin with the raw amino-acid sequence, 241 residues long: Triosephosphate isomerase (241 aa).

9–11 serves as a coordination point for substrate; the sequence is NWK. His96 functions as the Electrophile in the catalytic mechanism. Glu165 acts as the Proton acceptor in catalysis. Residues Gly171, Ser204, and 225–226 contribute to the substrate site; that span reads GG.

This sequence belongs to the triosephosphate isomerase family. As to quaternary structure, homodimer.

The protein resides in the cytoplasm. It catalyses the reaction D-glyceraldehyde 3-phosphate = dihydroxyacetone phosphate. Its pathway is carbohydrate biosynthesis; gluconeogenesis. It functions in the pathway carbohydrate degradation; glycolysis; D-glyceraldehyde 3-phosphate from glycerone phosphate: step 1/1. In terms of biological role, involved in the gluconeogenesis. Catalyzes stereospecifically the conversion of dihydroxyacetone phosphate (DHAP) to D-glyceraldehyde-3-phosphate (G3P). The protein is Triosephosphate isomerase of Prochlorococcus marinus subsp. pastoris (strain CCMP1986 / NIES-2087 / MED4).